The chain runs to 469 residues: Glutamate--tRNA ligase 2 (469 aa).

A 'HIGH' region motif is present at residues 8–18 (PSPTGFLHVGG). A 'KMSKS' region motif is present at residues 250-254 (KLSKR). Residue K253 coordinates ATP.

The protein belongs to the class-I aminoacyl-tRNA synthetase family. Glutamate--tRNA ligase type 1 subfamily. Monomer.

Its subcellular location is the cytoplasm. The enzyme catalyses tRNA(Glu) + L-glutamate + ATP = L-glutamyl-tRNA(Glu) + AMP + diphosphate. In terms of biological role, catalyzes the attachment of glutamate to tRNA(Glu) in a two-step reaction: glutamate is first activated by ATP to form Glu-AMP and then transferred to the acceptor end of tRNA(Glu). This chain is Glutamate--tRNA ligase 2, found in Thermotoga sp. (strain RQ2).